A 471-amino-acid polypeptide reads, in one-letter code: MTPTGTQHSLAGQTYAVPLIQPDLRREEAIQQVADALQYLQKVSGDIFSRISQRVELSRSQLQAIGERVSLAQAKIEKIKGSKKAIKVFSSAKYPAPERLQEYGSIFMGAQDPGLQRRPRHRIQSKHRPLDERALQEKLKFFPVCVNTKPEPEDEAEEGLGGLPSNISSVSSLLLFNTTENLYKKYVFLDPLAGAVTKTHVMLGAETEEKLFDAPLSISRREQLERQVPENYFYVPDLGQVPDIDVPSYLPDLPGVADDLMYSADLGPGIAPSAPGAIPELPTFHTEVAQPFKPDLEDGVLTARPPPPPPPPPPPAPAVLMSVPPPPPPPQAPPGQPAKGDDSGGASPSAPVQGAPKEVVDPSSGRATLLESIRQAGGIGKAKLRSVKERKLEKKKQKEQEQVRATSQGGDLMSDLFNKLAMRRKGISGKGPGSGASEGPGGAFARMSDSIPPLPPPQQPPGEEDEDDWES.

The tract at residues 1-54 is required for WASH complex assembly; that stretch reads MTPTGTQHSLAGQTYAVPLIQPDLRREEAIQQVADALQYLQKVSGDIFSRISQR. The WHD1 stretch occupies residues 1–167; it reads MTPTGTQHSL…EGLGGLPSNI (167 aa). A disordered region spans residues 297–471; the sequence is EDGVLTARPP…GEEDEDDWES (175 aa). Positions 304-336 are enriched in pro residues; it reads RPPPPPPPPPPPAPAVLMSVPPPPPPPQAPPGQ. A VCA region spans residues 353 to 471; sequence QGAPKEVVDP…GEEDEDDWES (119 aa). The WH2 domain maps to 365-387; that stretch reads GRATLLESIRQAGGIGKAKLRSV. The span at 386-402 shows a compositional bias: basic and acidic residues; that stretch reads SVKERKLEKKKQKEQEQ. Residues 428–442 are compositionally biased toward gly residues; the sequence is SGKGPGSGASEGPGG. Over residues 462–471 the composition is skewed to acidic residues; the sequence is GEEDEDDWES.

It belongs to the WASH1 family. As to quaternary structure, component of the WASH core complex also described as WASH regulatory complex SHRC composed of WASHC1, WASHC2, WASHC3, WASHC4 and WASHC5. The WASH core complex associates with the F-actin-capping protein dimer (formed by CAPZA1, CAPZA2 or CAPZA3 and CAPZB); the assembly has been initially described as WASH complex. Interacts (via WHD1 region) with WASHC2; the interaction is direct. Interacts with alpha-tubulin. Interacts with BECN1; WASHC1 and AMBRA1 can competitively interact with BECN1. Interacts with BLOC1S2; may associate with the BLOC-1 complex. Interacts with tubulin gamma chain (TUBG1 or TUBG2). Interacts with TBC1D23.

It localises to the early endosome membrane. The protein resides in the recycling endosome membrane. It is found in the late endosome. The protein localises to the cytoplasmic vesicle. Its subcellular location is the autophagosome. It localises to the cytoplasm. The protein resides in the cytoskeleton. It is found in the microtubule organizing center. The protein localises to the centrosome. Its subcellular location is the centriole. Acts as a component of the WASH core complex that functions as a nucleation-promoting factor (NPF) at the surface of endosomes, where it recruits and activates the Arp2/3 complex to induce actin polymerization, playing a key role in the fission of tubules that serve as transport intermediates during endosome sorting. Involved in endocytic trafficking of EGF. Involved in transferrin receptor recycling. Regulates the trafficking of endosomal alpha5beta1 integrin to the plasma membrane and involved in invasive cell migration. In T-cells involved in endosome-to-membrane recycling of receptors including T-cell receptor (TCR), CD28 and ITGAL; proposed to be implicated in T-cell proliferation and effector function. In dendritic cells involved in endosome-to-membrane recycling of major histocompatibility complex (MHC) class II probably involving retromer and subsequently allowing antigen sampling, loading and presentation during T-cell activation. Involved in negative regulation of autophagy independently from its role in endosomal sorting by inhibiting BECN1 ubiquitination to inactivate PIK3C3/Vps34 activity. The chain is WASH complex subunit 1 from Bos taurus (Bovine).